We begin with the raw amino-acid sequence, 170 residues long: Lipoprotein signal peptidase (170 aa).

The next 4 membrane-spanning stretches (helical) occupy residues 11–31 (LGWL…KAHF), 41–61 (IVVI…AAFS), 69–89 (WQRW…VVWL), and 95–115 (DDTW…GNLY). Active-site residues include aspartate 125 and aspartate 144. The helical transmembrane segment at 136 to 156 (YFPAFNFADSAITVGAIMLAL) threads the bilayer.

The protein belongs to the peptidase A8 family.

It is found in the cell inner membrane. It catalyses the reaction Release of signal peptides from bacterial membrane prolipoproteins. Hydrolyzes -Xaa-Yaa-Zaa-|-(S,diacylglyceryl)Cys-, in which Xaa is hydrophobic (preferably Leu), and Yaa (Ala or Ser) and Zaa (Gly or Ala) have small, neutral side chains.. Its pathway is protein modification; lipoprotein biosynthesis (signal peptide cleavage). Its function is as follows. This protein specifically catalyzes the removal of signal peptides from prolipoproteins. The chain is Lipoprotein signal peptidase from Pseudomonas fluorescens.